The following is a 339-amino-acid chain: MIRAGIIGATGYTGLELVRLLKNHPEAKITYLSSRTYAGKKLEEVFPSTLENSILSEFDPEKVSKNCDVLFTALPAGASYDLVRELKGVKIIDLGADFRFDDPGVYREWYGKELSGYENIKRVYGLPELHREEIKNAQVVGNPGCYPTSVILALAPALKHNLVDPETILVDAKSGVSGAGRKEKVDYLFSEVNESLRPYNVAKHRHVPEMEQELGKISGKKVNVVFTPHLVPMTRGILSTIYVKTDKSLEEIHEAYLEFYRNEPFVHVLPMGIYPSTKWCYGSNHVFIGMQMEERTNTLILMSAIDNLVKGASGQAVQNMNIMFGLDETKGLEFTPIYP.

Cys-145 is an active-site residue.

The protein belongs to the NAGSA dehydrogenase family. Type 1 subfamily.

It is found in the cytoplasm. The enzyme catalyses N-acetyl-L-glutamate 5-semialdehyde + phosphate + NADP(+) = N-acetyl-L-glutamyl 5-phosphate + NADPH + H(+). It participates in amino-acid biosynthesis; L-arginine biosynthesis; N(2)-acetyl-L-ornithine from L-glutamate: step 3/4. Functionally, catalyzes the NADPH-dependent reduction of N-acetyl-5-glutamyl phosphate to yield N-acetyl-L-glutamate 5-semialdehyde. The sequence is that of N-acetyl-gamma-glutamyl-phosphate reductase from Thermotoga sp. (strain RQ2).